A 166-amino-acid chain; its full sequence is Eukaryotic translation initiation factor 5A (166 aa).

Residues 1-21 (MSDEDHDFSHQGGGDNASKTY) form a disordered region. Lysine 53 bears the Hypusine mark. Residues 101–121 (EDPSLPSHLSLMDDEGESRED) are disordered. Positions 112 to 121 (MDDEGESRED) are enriched in acidic residues.

The protein belongs to the eIF-5A family. In terms of processing, lys-53 undergoes hypusination, a unique post-translational modification that consists in the addition of a butylamino group from spermidine to lysine side chain, leading to the formation of the unusual amino acid hypusine. eIF-5As are the only known proteins to undergo this modification, which is essential for their function.

Its subcellular location is the cytoplasm. Its function is as follows. Translation factor that promotes translation elongation and termination, particularly upon ribosome stalling at specific amino acid sequence contexts. Binds between the exit (E) and peptidyl (P) site of the ribosome and promotes rescue of stalled ribosome: specifically required for efficient translation of polyproline-containing peptides as well as other motifs that stall the ribosome. Acts as a ribosome quality control (RQC) cofactor by joining the RQC complex to facilitate peptidyl transfer during CAT tailing step. The protein is Eukaryotic translation initiation factor 5A of Leishmania donovani.